The following is a 394-amino-acid chain: Elongation factor Tu (394 aa).

A tr-type G domain is found at 10–204; sequence KPHVNVGTIG…ALDTYIPEPE (195 aa). Positions 19-26 are G1; the sequence is GHVDHGKT. 19–26 provides a ligand contact to GTP; sequence GHVDHGKT. Thr26 contacts Mg(2+). The tract at residues 60–64 is G2; sequence GITIN. Residues 81–84 are G3; the sequence is DCPG. GTP is bound by residues 81 to 85 and 136 to 139; these read DCPGH and NKCD. The tract at residues 136-139 is G4; it reads NKCD. The G5 stretch occupies residues 174–176; sequence SAL.

The protein belongs to the TRAFAC class translation factor GTPase superfamily. Classic translation factor GTPase family. EF-Tu/EF-1A subfamily. In terms of assembly, monomer.

It localises to the cytoplasm. The enzyme catalyses GTP + H2O = GDP + phosphate + H(+). Its function is as follows. GTP hydrolase that promotes the GTP-dependent binding of aminoacyl-tRNA to the A-site of ribosomes during protein biosynthesis. This is Elongation factor Tu from Shewanella denitrificans (strain OS217 / ATCC BAA-1090 / DSM 15013).